The primary structure comprises 158 residues: SUMO-conjugating enzyme UBC9 (158 aa).

The UBC core domain maps to Ile-4–Pro-157. Residues Arg-13–Lys-18 form an interaction with SUMO1 region. The active-site Glycyl thioester intermediate is the Cys-93.

This sequence belongs to the ubiquitin-conjugating enzyme family. In terms of assembly, interacts with SOX9.

Its subcellular location is the nucleus. It localises to the cytoplasm. It participates in protein modification; protein sumoylation. Functionally, accepts the ubiquitin-like proteins SUMO1, SUMO2 and SUMO3 from the UBLE1A-UBLE1B E1 complex and catalyzes their covalent attachment to other proteins with the help of an E3 ligase such as RANBP2 or CBX4. Essential for nuclear architecture and chromosome segregation. The polypeptide is SUMO-conjugating enzyme UBC9 (UBE2I) (Gallus gallus (Chicken)).